The primary structure comprises 185 residues: Small ribosomal subunit protein uS4c (185 aa).

Residues 72-134 (MRLDNVIFRL…PTSCNALKGE (63 aa)) enclose the S4 RNA-binding domain. The tract at residues 132-154 (KGESPGGGETPDHLTASLSEGSR) is disordered.

It belongs to the universal ribosomal protein uS4 family. In terms of assembly, part of the 30S ribosomal subunit. Contacts protein S5. The interaction surface between S4 and S5 is involved in control of translational fidelity.

The protein resides in the plastid. The protein localises to the chloroplast. One of the primary rRNA binding proteins, it binds directly to 16S rRNA where it nucleates assembly of the body of the 30S subunit. In terms of biological role, with S5 and S12 plays an important role in translational accuracy. This Woodwardia radicans (Rooting chainfern) protein is Small ribosomal subunit protein uS4c (rps4).